The primary structure comprises 345 residues: Probable translocation protein y4yO (345 aa).

The segment covering 1-22 has biased composition (basic and acidic residues); it reads MSDTSEEKSHGATPKKLSDARK. The interval 1–25 is disordered; that stretch reads MSDTSEEKSHGATPKKLSDARKRGQ. The next 3 helical transmembrane spans lie at 87 to 107, 151 to 171, and 189 to 209; these read LATVGPLLSALFGAVILAALL, VLVLGGTFSLFFLGLWKTMVY, and QLIGIGAGALLIGGLIDLLLQ.

This sequence belongs to the type III secretion exporter family.

Its subcellular location is the cell membrane. Functionally, could be involved in the secretion of an unknown factor. The polypeptide is Probable translocation protein y4yO (Sinorhizobium fredii (strain NBRC 101917 / NGR234)).